Consider the following 247-residue polypeptide: UPF0259 membrane protein BU276 (247 aa).

6 helical membrane-spanning segments follow: residues 20-40 (IGAI…IDMF), 85-105 (IMES…LISV), 114-134 (IVSS…LNFL), 137-157 (FIIQ…SIIL), 188-208 (IIGP…MLLA), and 218-238 (LFLI…IYLF).

The protein belongs to the UPF0259 family.

It localises to the cell membrane. The protein is UPF0259 membrane protein BU276 of Buchnera aphidicola subsp. Acyrthosiphon pisum (strain APS) (Acyrthosiphon pisum symbiotic bacterium).